The chain runs to 270 residues: MLDIIILVVIGGAFGAMTREFIMLMVPPLTDGFPLDILVANVVACFLLGTVTALYARKIHSRDVHTIIGTGMMGGVSTFSSFAYGSVVLASASMSAFLIAAAYVTVSVVAGYVAVLAGMKFGEKSADILHRYPPMASIIDSGLVTVESRHSVAETIERVAAKAKSMGMNVFTRVDHGAGAKEAGLGLPPTELIIFGNPQNGTVLMQDKRTIGLDLPIRALAWEDGSGKVWLTVNDPAWLAQRHSLGLSSDVAIKAMVTGTGTVTKYAAGD.

Transmembrane regions (helical) follow at residues 4–24 (IIIL…FIML), 35–55 (LDIL…TALY), 67–87 (IIGT…YGSV), and 96–116 (AFLI…VAVL). Na(+) is bound by residues Gly-74 and Ser-77.

The protein belongs to the fluoride channel Fluc/FEX (TC 1.A.43) family.

The protein resides in the cell inner membrane. The enzyme catalyses fluoride(in) = fluoride(out). Na(+) is not transported, but it plays an essential structural role and its presence is essential for fluoride channel function. Fluoride-specific ion channel. Important for reducing fluoride concentration in the cell, thus reducing its toxicity. The chain is Fluoride-specific ion channel FluC 1 from Brucella abortus biovar 1 (strain 9-941).